Here is a 367-residue protein sequence, read N- to C-terminus: Flagellar P-ring protein (367 aa).

Positions 1-22 (MRRMLVIRWILAIHLIATQVFA) are cleaved as a signal peptide.

It belongs to the FlgI family. As to quaternary structure, the basal body constitutes a major portion of the flagellar organelle and consists of four rings (L,P,S, and M) mounted on a central rod.

Its subcellular location is the periplasm. The protein resides in the bacterial flagellum basal body. Functionally, assembles around the rod to form the L-ring and probably protects the motor/basal body from shearing forces during rotation. This chain is Flagellar P-ring protein, found in Legionella pneumophila subsp. pneumophila (strain Philadelphia 1 / ATCC 33152 / DSM 7513).